Consider the following 433-residue polypeptide: Zinc finger and SCAN domain-containing protein 4 (433 aa).

Residues arginine 44 to serine 126 form the SCAN box domain. Composition is skewed to polar residues over residues serine 162–glutamate 184 and glutamine 277–cysteine 298. Disordered stretches follow at residues serine 162–serine 199 and alanine 272–cysteine 298. C2H2-type zinc fingers lie at residues tyrosine 312–histidine 334, phenylalanine 340–histidine 362, phenylalanine 368–histidine 390, and tyrosine 396–histidine 418. Residues histidine 414–serine 433 form a disordered region.

It is found in the nucleus. Its subcellular location is the chromosome. The protein resides in the telomere. In terms of biological role, embryonic stem (ES) cell-specific transcription factor required to regulate ES cell pluripotency. Binds telomeres and plays a key role in genomic stability in ES cells by regulating telomere elongation. Acts as an activator of spontaneous telomere sister chromatid exchange (T-SCE) and telomere elongation in undifferentiated ES cells. The polypeptide is Zinc finger and SCAN domain-containing protein 4 (ZSCAN4) (Pongo pygmaeus (Bornean orangutan)).